Reading from the N-terminus, the 330-residue chain is Glycerol-3-phosphate dehydrogenase [NAD(P)+] (330 aa).

Positions 10, 11, 31, and 105 each coordinate NADPH. Sn-glycerol 3-phosphate is bound by residues K105, G135, and S137. A139 is an NADPH binding site. Positions 190, 243, 253, 254, and 255 each coordinate sn-glycerol 3-phosphate. The Proton acceptor role is filled by K190. R254 contributes to the NADPH binding site. Residues V278 and E280 each contribute to the NADPH site.

Belongs to the NAD-dependent glycerol-3-phosphate dehydrogenase family.

The protein localises to the cytoplasm. It carries out the reaction sn-glycerol 3-phosphate + NAD(+) = dihydroxyacetone phosphate + NADH + H(+). The enzyme catalyses sn-glycerol 3-phosphate + NADP(+) = dihydroxyacetone phosphate + NADPH + H(+). Its pathway is membrane lipid metabolism; glycerophospholipid metabolism. In terms of biological role, catalyzes the reduction of the glycolytic intermediate dihydroxyacetone phosphate (DHAP) to sn-glycerol 3-phosphate (G3P), the key precursor for phospholipid synthesis. In Solidesulfovibrio magneticus (strain ATCC 700980 / DSM 13731 / RS-1) (Desulfovibrio magneticus), this protein is Glycerol-3-phosphate dehydrogenase [NAD(P)+].